The sequence spans 96 residues: Cysteine protease immunity 1 (96 aa).

The polypeptide is Cysteine protease immunity 1 (Escherichia coli O1:K1:H7 (strain ATCC 11775 / DSM 30083 / JCM 1649 / NBRC 102203 / NCTC 9001 / U5/41)).